The chain runs to 608 residues: Protein Spindly (608 aa).

At Met1 the chain carries N-acetylmethionine. Residues Met1–Arg445 are a coiled coil. The tract at residues Pro465 to His487 is disordered. Phosphoserine is present on residues Ser516, Ser518, and Ser558.

This sequence belongs to the Spindly family. Interacts with KNTC1 and ZW10. These interactions appear weak and may be transient or indirect. Interacts with dynein intermediate chain and dynactin (DCTN1). Interacts with the catalytically active form of USP45. Monoubiquitinated with'Lys-48' linkage. Deubiquitinated by USP45.

It is found in the cytoplasm. The protein resides in the cytoskeleton. The protein localises to the microtubule organizing center. Its subcellular location is the centrosome. It localises to the chromosome. It is found in the centromere. The protein resides in the kinetochore. The protein localises to the nucleus. Its subcellular location is the spindle pole. Functionally, required for the localization of dynein and dynactin to the mitotic kintochore. Dynein is believed to control the initial lateral interaction between the kinetochore and spindle microtubules and to facilitate the subsequent formation of end-on kinetochore-microtubule attachments mediated by the NDC80 complex. Also required for correct spindle orientation. Does not appear to be required for the removal of spindle assembly checkpoint (SAC) proteins from the kinetochore upon bipolar spindle attachment. Acts as an adapter protein linking the dynein motor complex to various cargos and converts dynein from a non-processive to a highly processive motor in the presence of dynactin. Facilitates the interaction between dynein and dynactin and activates dynein processivity (the ability to move along a microtubule for a long distance without falling off the track). Plays a role in cell migration. In Mus musculus (Mouse), this protein is Protein Spindly (Spdl1).